A 156-amino-acid polypeptide reads, in one-letter code: RNA polymerase sigma factor SigS (156 aa).

Positions 29 to 44 (EYYQLLLIKMWQLSQI) match the Polymerase core binding motif. Positions 126–145 (QFEIAEIMSLSLSTIKLIKT) form a DNA-binding region, H-T-H motif.

It belongs to the sigma-70 factor family.

Functionally, sigma factors are initiation factors that promote the attachment of RNA polymerase to specific initiation sites and are then released. Sigma-S contributes to the protection against external stress, thus playing a role in cellular fitness and survival. This chain is RNA polymerase sigma factor SigS (sigS), found in Staphylococcus aureus (strain bovine RF122 / ET3-1).